A 386-amino-acid polypeptide reads, in one-letter code: uncharacterized protein (386 aa).

The next 9 membrane-spanning stretches (helical) occupy residues 48-68 (NLIT…MLVY), 78-98 (PSWV…FDAI), 136-156 (LQLD…YFYI), 171-191 (YFSG…LTAI), 213-233 (FLPY…ALLL), 253-273 (VIKA…VFSL), 285-305 (FLTI…VVIV), 316-336 (WNVL…FGVL), and 344-364 (FFCY…HVIA).

The protein belongs to the CDP-alcohol phosphatidyltransferase class-I family.

It is found in the membrane. This is an uncharacterized protein from Schizosaccharomyces pombe (strain 972 / ATCC 24843) (Fission yeast).